A 377-amino-acid polypeptide reads, in one-letter code: Carbonic anhydrase 1 (377 aa).

The first 20 residues, 1–20 (MARTGALLLVALALAGCAQA), serve as a signal peptide directing secretion. Residues 38–318 (DHWDHGLNGE…HHHRRLLHNH (281 aa)) form the Alpha-carbonic anhydrase domain. Intrachain disulfides connect Cys-61–Cys-264, Cys-194–Cys-198, and Cys-296–Cys-351. An N-linked (GlcNAc...) asparagine glycan is attached at Asn-101. His-112 acts as the Proton acceptor in catalysis. Asn-135 is a glycosylation site (N-linked (GlcNAc...) asparagine). Zn(2+)-binding residues include His-163, His-165, and His-182. Substrate contacts are provided by residues Thr-260 and 260-261 (TT). Asn-297 carries N-linked (GlcNAc...) asparagine glycosylation.

Belongs to the alpha-carbonic anhydrase family. Tetramer of two large and two small subunits linked by two disulfide bonds. Zn(2+) is required as a cofactor.

The protein resides in the periplasm. It carries out the reaction hydrogencarbonate + H(+) = CO2 + H2O. Functionally, reversible hydration of carbon dioxide. The sequence is that of Carbonic anhydrase 1 (CAH1) from Chlamydomonas reinhardtii (Chlamydomonas smithii).